We begin with the raw amino-acid sequence, 371 residues long: Flagellar P-ring protein (371 aa).

An N-terminal signal peptide occupies residues 1–21 (MSRSFFATVLGLALAAMTVMA).

It belongs to the FlgI family. The basal body constitutes a major portion of the flagellar organelle and consists of four rings (L,P,S, and M) mounted on a central rod.

Its subcellular location is the periplasm. The protein resides in the bacterial flagellum basal body. Its function is as follows. Assembles around the rod to form the L-ring and probably protects the motor/basal body from shearing forces during rotation. The protein is Flagellar P-ring protein of Caulobacter sp. (strain K31).